The following is a 169-amino-acid chain: N-alpha-acetyltransferase 50 (169 aa).

The region spanning 5–154 is the N-acetyltransferase domain; the sequence is IELGDVTPHN…DAHVLQKNLK (150 aa). Tyr30 provides a ligand contact to substrate. Residue Tyr72 is part of the active site. Position 74 (Met74) interacts with substrate. Acetyl-CoA is bound at residue 76 to 89; that stretch reads LGCLAPYRRLGIGT. 78 to 89 is a CoA binding site; sequence CLAPYRRLGIGT. His111 is a catalytic residue. 116-125 is a CoA binding site; that stretch reads NESAIDFYRK. Positions 137–140 are substrate; that stretch reads YYKR.

The protein belongs to the acetyltransferase family. GNAT subfamily.

The protein localises to the cytoplasm. It localises to the nucleus. It catalyses the reaction N-terminal L-methionyl-L-alanyl-[protein] + acetyl-CoA = N-terminal N(alpha)-acetyl-L-methionyl-L-alanyl-[protein] + CoA + H(+). The catalysed reaction is N-terminal L-methionyl-L-seryl-[protein] + acetyl-CoA = N-terminal N(alpha)-acetyl-L-methionyl-L-seryl-[protein] + CoA + H(+). The enzyme catalyses N-terminal L-methionyl-L-valyl-[protein] + acetyl-CoA = N-terminal N(alpha)-acetyl-L-methionyl-L-valyl-[protein] + CoA + H(+). It carries out the reaction N-terminal L-methionyl-L-threonyl-[protein] + acetyl-CoA = N-terminal N(alpha)-acetyl-L-methionyl-L-threonyl-[protein] + CoA + H(+). It catalyses the reaction N-terminal L-methionyl-L-lysyl-[protein] + acetyl-CoA = N-terminal N(alpha)-acetyl-L-methionyl-L-lysyl-[protein] + CoA + H(+). The catalysed reaction is N-terminal L-methionyl-L-leucyl-[protein] + acetyl-CoA = N-terminal N(alpha)-acetyl-L-methionyl-L-leucyl-[protein] + CoA + H(+). The enzyme catalyses N-terminal L-methionyl-L-phenylalanyl-[protein] + acetyl-CoA = N-terminal N(alpha)-acetyl-L-methionyl-L-phenylalanyl-[protein] + CoA + H(+). It carries out the reaction N-terminal L-methionyl-L-tyrosyl-[protein] + acetyl-CoA = N-terminal N(alpha)-acetyl-L-methionyl-L-tyrosyl-[protein] + CoA + H(+). Functionally, N-alpha-acetyltransferase that acetylates the N-terminus of proteins that retain their initiating methionine. Has a broad substrate specificity: able to acetylate the initiator methionine of most peptides, except for those with a proline in second position. Also displays N-epsilon-acetyltransferase activity by mediating acetylation of the side chain of specific lysines on proteins. The relevance of N-epsilon-acetyltransferase activity is however unclear. Required for sister chromatid cohesion during mitosis by promoting binding of CDCA5/sororin to cohesin. In Xenopus tropicalis (Western clawed frog), this protein is N-alpha-acetyltransferase 50 (naa50).